A 614-amino-acid polypeptide reads, in one-letter code: DNA mismatch repair protein MutL (614 aa).

It belongs to the DNA mismatch repair MutL/HexB family.

In terms of biological role, this protein is involved in the repair of mismatches in DNA. It is required for dam-dependent methyl-directed DNA mismatch repair. May act as a 'molecular matchmaker', a protein that promotes the formation of a stable complex between two or more DNA-binding proteins in an ATP-dependent manner without itself being part of a final effector complex. The polypeptide is DNA mismatch repair protein MutL (Chlorobium phaeovibrioides (strain DSM 265 / 1930) (Prosthecochloris vibrioformis (strain DSM 265))).